The primary structure comprises 540 residues: Chaperonin GroEL 2 (540 aa).

ATP contacts are provided by residues 30–33 (TLGP), Lys51, 87–91 (DGTTT), Gly415, 480–482 (NAL), and Asp496.

The protein belongs to the chaperonin (HSP60) family. In terms of assembly, forms a cylinder of 14 subunits composed of two heptameric rings stacked back-to-back. Interacts with the co-chaperonin GroES.

It localises to the cytoplasm. The enzyme catalyses ATP + H2O + a folded polypeptide = ADP + phosphate + an unfolded polypeptide.. Together with its co-chaperonin GroES, plays an essential role in assisting protein folding. The GroEL-GroES system forms a nano-cage that allows encapsulation of the non-native substrate proteins and provides a physical environment optimized to promote and accelerate protein folding. This chain is Chaperonin GroEL 2, found in Protochlamydia amoebophila (strain UWE25).